An 869-amino-acid chain; its full sequence is Leucine--tRNA ligase (869 aa).

The 'HIGH' region motif lies at 42-52 (PYPSGRLHMGH). The short motif at 620–624 (KMSKS) is the 'KMSKS' region element. Residue Lys-623 participates in ATP binding.

Belongs to the class-I aminoacyl-tRNA synthetase family.

It is found in the cytoplasm. The catalysed reaction is tRNA(Leu) + L-leucine + ATP = L-leucyl-tRNA(Leu) + AMP + diphosphate. The chain is Leucine--tRNA ligase from Hamiltonella defensa subsp. Acyrthosiphon pisum (strain 5AT).